A 259-amino-acid chain; its full sequence is Small ribosomal subunit protein uS2 (259 aa).

The interval 228–259 (VSFGSEEAEENNQKEDNEEIFEIEDVDESEEM) is disordered. Residues 233–259 (EEAEENNQKEDNEEIFEIEDVDESEEM) show a composition bias toward acidic residues.

Belongs to the universal ribosomal protein uS2 family.

This chain is Small ribosomal subunit protein uS2, found in Thermosipho africanus (strain TCF52B).